The primary structure comprises 110 residues: Iron-sulfur cluster assembly protein CyaY (110 aa).

This sequence belongs to the frataxin family.

Involved in iron-sulfur (Fe-S) cluster assembly. May act as a regulator of Fe-S biogenesis. This Pseudomonas fluorescens (strain SBW25) protein is Iron-sulfur cluster assembly protein CyaY.